Reading from the N-terminus, the 876-residue chain is Valine--tRNA ligase (876 aa).

Positions 43 to 53 (PNVTGVLHMGH) match the 'HIGH' region motif. A 'KMSKS' region motif is present at residues 534–538 (KMSKS). Lys-537 is an ATP binding site. Residues 847-876 (PEKVVAIEKAKKADAEAKIEALKASLKSLS) are a coiled coil.

Belongs to the class-I aminoacyl-tRNA synthetase family. ValS type 1 subfamily. Monomer.

The protein resides in the cytoplasm. It carries out the reaction tRNA(Val) + L-valine + ATP = L-valyl-tRNA(Val) + AMP + diphosphate. In terms of biological role, catalyzes the attachment of valine to tRNA(Val). As ValRS can inadvertently accommodate and process structurally similar amino acids such as threonine, to avoid such errors, it has a 'posttransfer' editing activity that hydrolyzes mischarged Thr-tRNA(Val) in a tRNA-dependent manner. This Christiangramia forsetii (strain DSM 17595 / CGMCC 1.15422 / KT0803) (Gramella forsetii) protein is Valine--tRNA ligase.